Consider the following 429-residue polypeptide: Serine--tRNA ligase (429 aa).

Position 229-231 (229-231 (TAE)) interacts with L-serine. 260-262 (RSE) lines the ATP pocket. E283 serves as a coordination point for L-serine. Residue 347 to 350 (EISS) coordinates ATP. S383 contacts L-serine.

This sequence belongs to the class-II aminoacyl-tRNA synthetase family. Type-1 seryl-tRNA synthetase subfamily. In terms of assembly, homodimer. The tRNA molecule binds across the dimer.

It localises to the cytoplasm. The enzyme catalyses tRNA(Ser) + L-serine + ATP = L-seryl-tRNA(Ser) + AMP + diphosphate + H(+). It carries out the reaction tRNA(Sec) + L-serine + ATP = L-seryl-tRNA(Sec) + AMP + diphosphate + H(+). It functions in the pathway aminoacyl-tRNA biosynthesis; selenocysteinyl-tRNA(Sec) biosynthesis; L-seryl-tRNA(Sec) from L-serine and tRNA(Sec): step 1/1. In terms of biological role, catalyzes the attachment of serine to tRNA(Ser). Is also able to aminoacylate tRNA(Sec) with serine, to form the misacylated tRNA L-seryl-tRNA(Sec), which will be further converted into selenocysteinyl-tRNA(Sec). This chain is Serine--tRNA ligase, found in Orientia tsutsugamushi (strain Boryong) (Rickettsia tsutsugamushi).